We begin with the raw amino-acid sequence, 333 residues long: Anthranilate phosphoribosyltransferase (333 aa).

5-phospho-alpha-D-ribose 1-diphosphate contacts are provided by residues Gly81, 84–85, Thr89, 91–94, 109–117, and Ser121; these read GD, NIST, and KHGNRSVSS. An anthranilate-binding site is contributed by Gly81. Mg(2+) is bound at residue Ser93. Asn112 provides a ligand contact to anthranilate. Residue Arg167 participates in anthranilate binding. Mg(2+) is bound by residues Asp225 and Glu226.

This sequence belongs to the anthranilate phosphoribosyltransferase family. Homodimer. Mg(2+) is required as a cofactor.

It carries out the reaction N-(5-phospho-beta-D-ribosyl)anthranilate + diphosphate = 5-phospho-alpha-D-ribose 1-diphosphate + anthranilate. The protein operates within amino-acid biosynthesis; L-tryptophan biosynthesis; L-tryptophan from chorismate: step 2/5. Its function is as follows. Catalyzes the transfer of the phosphoribosyl group of 5-phosphorylribose-1-pyrophosphate (PRPP) to anthranilate to yield N-(5'-phosphoribosyl)-anthranilate (PRA). The sequence is that of Anthranilate phosphoribosyltransferase from Glaesserella parasuis serovar 5 (strain SH0165) (Haemophilus parasuis).